A 283-amino-acid chain; its full sequence is 4-diphosphocytidyl-2-C-methyl-D-erythritol kinase (283 aa).

The active site involves Lys10. Position 95 to 105 (95 to 105 (PVAAGLGGGSS)) interacts with ATP. The active site involves Asp137.

Belongs to the GHMP kinase family. IspE subfamily.

It catalyses the reaction 4-CDP-2-C-methyl-D-erythritol + ATP = 4-CDP-2-C-methyl-D-erythritol 2-phosphate + ADP + H(+). It participates in isoprenoid biosynthesis; isopentenyl diphosphate biosynthesis via DXP pathway; isopentenyl diphosphate from 1-deoxy-D-xylulose 5-phosphate: step 3/6. In terms of biological role, catalyzes the phosphorylation of the position 2 hydroxy group of 4-diphosphocytidyl-2C-methyl-D-erythritol. In Pediococcus pentosaceus (strain ATCC 25745 / CCUG 21536 / LMG 10740 / 183-1w), this protein is 4-diphosphocytidyl-2-C-methyl-D-erythritol kinase.